The primary structure comprises 229 residues: Clathrin light chain B (229 aa).

Composition is skewed to low complexity over residues 1–17 (MAED…GAPE) and 45–58 (GAPA…AQPG). Residues 1-70 (MAEDFGFFSS…SGAGSEDMST (70 aa)) are disordered. A phosphoserine mark is found at S11 and S13. The involved in binding clathrin heavy chain stretch occupies residues 93 to 155 (ADRLTQEPES…QVEKNKINNR (63 aa)). T187 is modified (phosphothreonine). C199 and C209 are disulfide-bonded. K204 is subject to N6-acetyllysine. S217 carries the phosphoserine modification.

This sequence belongs to the clathrin light chain family. As to quaternary structure, clathrin coats are formed from molecules containing 3 heavy chains and 3 light chains. Interacts (via N-terminus) with HIP1. Interacts with HIP1R.

The protein resides in the cytoplasmic vesicle membrane. The protein localises to the membrane. It is found in the coated pit. Clathrin is the major protein of the polyhedral coat of coated pits and vesicles. This chain is Clathrin light chain B (Cltb), found in Mus musculus (Mouse).